A 158-amino-acid polypeptide reads, in one-letter code: Lipoprotein signal peptidase (158 aa).

The next 4 helical transmembrane spans lie at 7–27 (LFWI…YWVV), 38–58 (ILPG…FSLF), 67–87 (WLSL…PVLE), and 95–115 (GLIL…GYVV). Residues Asp-116 and Asp-132 contribute to the active site. A helical membrane pass occupies residues 125-145 (FAVFNMADSFISIGIVCLLLA).

The protein belongs to the peptidase A8 family.

The protein resides in the cell inner membrane. The catalysed reaction is Release of signal peptides from bacterial membrane prolipoproteins. Hydrolyzes -Xaa-Yaa-Zaa-|-(S,diacylglyceryl)Cys-, in which Xaa is hydrophobic (preferably Leu), and Yaa (Ala or Ser) and Zaa (Gly or Ala) have small, neutral side chains.. It participates in protein modification; lipoprotein biosynthesis (signal peptide cleavage). This protein specifically catalyzes the removal of signal peptides from prolipoproteins. In Trichormus variabilis (strain ATCC 29413 / PCC 7937) (Anabaena variabilis), this protein is Lipoprotein signal peptidase.